Consider the following 428-residue polypeptide: Phosphoglucosamine mutase (428 aa).

Residue Ser96 is the Phosphoserine intermediate of the active site. Mg(2+) is bound by residues Ser96, Asp229, Asp231, and Asp233. Residue Ser96 is modified to Phosphoserine.

Belongs to the phosphohexose mutase family. Requires Mg(2+) as cofactor. In terms of processing, activated by phosphorylation.

The enzyme catalyses alpha-D-glucosamine 1-phosphate = D-glucosamine 6-phosphate. In terms of biological role, catalyzes the conversion of glucosamine-6-phosphate to glucosamine-1-phosphate. The sequence is that of Phosphoglucosamine mutase from Thermotoga neapolitana (strain ATCC 49049 / DSM 4359 / NBRC 107923 / NS-E).